We begin with the raw amino-acid sequence, 97 residues long: Large ribosomal subunit protein eL21 (97 aa).

It belongs to the eukaryotic ribosomal protein eL21 family.

The polypeptide is Large ribosomal subunit protein eL21 (Methanosarcina mazei (strain ATCC BAA-159 / DSM 3647 / Goe1 / Go1 / JCM 11833 / OCM 88) (Methanosarcina frisia)).